A 498-amino-acid polypeptide reads, in one-letter code: DEAD-box ATP-dependent RNA helicase 6 (498 aa).

The disordered stretch occupies residues 1-109 (MDPRARYPPG…WKAQLKLPPQ (109 aa)). Positions 33 to 49 (QHQHQHQQPPHPHHHQY) are enriched in basic residues. 2 stretches are compositionally biased toward low complexity: residues 50-61 (VQRQPQPQQTPH) and 75-86 (AAEAAGASEQKA). The Q motif signature appears at 124 to 152 (NEFEDYFLKRELLMGIYEKGFERPSPIQE). The 171-residue stretch at 155–325 (IPIALTGSDI…DKYLPKPYVI (171 aa)) folds into the Helicase ATP-binding domain. An ATP-binding site is contributed by 168–175 (AKNGTGKT). A DEAD box motif is present at residues 273–276 (DEAD). The Helicase C-terminal domain occupies 335–495 (GITQFYAFVE…PIPPQIDRAI (161 aa)).

The protein belongs to the DEAD box helicase family. DDX6/DHH1 subfamily.

It localises to the cytoplasm. Its subcellular location is the P-body. It carries out the reaction ATP + H2O = ADP + phosphate + H(+). Its function is as follows. ATP-dependent RNA helicase involved in mRNA turnover, and more specifically in mRNA decapping. The chain is DEAD-box ATP-dependent RNA helicase 6 from Oryza sativa subsp. japonica (Rice).